A 578-amino-acid polypeptide reads, in one-letter code: Membrane protein insertase YidC (578 aa).

Residues 3 to 23 (IQRSILIVALAVVSYLLVLQW) form a helical membrane-spanning segment. Residues 34-72 (AASASMNTTQGLPDTPSASGTSSDVPTAQSSAAGSEAAD) form a disordered region. Over residues 37-66 (ASMNTTQGLPDTPSASGTSSDVPTAQSSAA) the composition is skewed to polar residues. A run of 5 helical transmembrane segments spans residues 361 to 381 (LELTVDYGFLWFIAQPIFWLL), 387 to 407 (LIGNWGWSIIALTVLIKLAFF), 457 to 477 (LGGCLPILVQMPVFLSLYWVL), 500 to 520 (PFFILPIVMGGTMLIQQMLNP), and 535 to 555 (PIIFTFFFLWFPAGLVLYWVV).

The protein belongs to the OXA1/ALB3/YidC family. Type 1 subfamily. In terms of assembly, interacts with the Sec translocase complex via SecD. Specifically interacts with transmembrane segments of nascent integral membrane proteins during membrane integration.

It is found in the cell inner membrane. In terms of biological role, required for the insertion and/or proper folding and/or complex formation of integral membrane proteins into the membrane. Involved in integration of membrane proteins that insert both dependently and independently of the Sec translocase complex, as well as at least some lipoproteins. Aids folding of multispanning membrane proteins. This chain is Membrane protein insertase YidC, found in Pseudomonas aeruginosa (strain LESB58).